We begin with the raw amino-acid sequence, 490 residues long: Cytochrome P450 71B28 (490 aa).

The chain crosses the membrane as a helical span at residues 1-21 (MSVFLCFLCLLPLILIFLKNL). Cysteine 440 contacts heme.

It belongs to the cytochrome P450 family. Heme is required as a cofactor.

It localises to the membrane. This chain is Cytochrome P450 71B28 (CYP71B28), found in Arabidopsis thaliana (Mouse-ear cress).